An 85-amino-acid chain; its full sequence is Putative N.vectensis toxin 1 9 (85 aa).

The first 20 residues, 1 to 20 (MASFKIVIVCLALLVAVASA), serve as a signal peptide directing secretion. Positions 21–36 (RRRDMMSDDELDYHFS) are excised as a propeptide. Cystine bridges form between Cys-42–Cys-82, Cys-44–Cys-72, and Cys-65–Cys-83.

Belongs to the sea anemone sodium channel inhibitory toxin family. Type II subfamily. In terms of tissue distribution, expressed in ectodermal glands and in clumps outside of the extodermal layer. Is not expressed in nematocytes. In adult female tissues, shows similar expression levels in mesenteries (gametes-producing tissue), tentacles, pharynx and physa.

The protein localises to the secreted. In terms of biological role, binds to site 3 of voltage-gated sodium channels and inhibits the inactivation process. Is highly active on DmNav1/TipE (drosophila) and is only extremely weakly active on rat Nav1.4-beta-1/SCN4A-SCN1B, and on human Nav1.5-beta-1/SCN5A-beta-1. This reveals high specificity for arthropod over mammalian channels. In vivo, when released into the medium, this recombinant toxin induces impaired swimming, paralysis and death of the crustacean A.nauplii within several hours. Also causes paralysis of cherry shrimps immediately after injection at very low doses. Its effect on zebrafish (D.rerio) larvae is also rapid, since it induces tail twitching accompanied by impaired swimming after 20 minutes and complete paralysis within 45 minutes. It has also been observed to cause death of zebrafish larvae within 1 hour. This chain is Putative N.vectensis toxin 1 9, found in Nematostella vectensis (Starlet sea anemone).